A 234-amino-acid polypeptide reads, in one-letter code: LexA repressor (234 aa).

Positions 26–46 (FDEMKEALDLASKSGIHRLIT) form a DNA-binding region, H-T-H motif. The tract at residues 73–107 (ATAAAPPKGRGAFRPQVFEGGGAPPPAASPAAAAN) is disordered. Residues serine 155 and lysine 192 each act as for autocatalytic cleavage activity in the active site.

The protein belongs to the peptidase S24 family. In terms of assembly, homodimer.

It carries out the reaction Hydrolysis of Ala-|-Gly bond in repressor LexA.. In terms of biological role, represses a number of genes involved in the response to DNA damage (SOS response), including recA and lexA. In the presence of single-stranded DNA, RecA interacts with LexA causing an autocatalytic cleavage which disrupts the DNA-binding part of LexA, leading to derepression of the SOS regulon and eventually DNA repair. The chain is LexA repressor from Caulobacter vibrioides (strain ATCC 19089 / CIP 103742 / CB 15) (Caulobacter crescentus).